A 735-amino-acid polypeptide reads, in one-letter code: Transcription factor sphG (735 aa).

The segment at residues 13–40 is a DNA-binding region (zn(2)-C6 fungal-type); the sequence is CDQCRARKIRCSREKPSCRNCGRLGLQC. Residues 89–110 are disordered; sequence TISPSARCPASPASPSPRLSDK. Residues 91 to 106 are compositionally biased toward low complexity; it reads SPSARCPASPASPSPR.

The protein resides in the nucleus. Its function is as follows. Transcription factor that regulates the expression of the gene cluster that mediates the biosynthesis of sphingofungins, bioactive molecules acting as sphingolipid inhibitors via inhibiting serine palmitoyl transferase (SPT). This is Transcription factor sphG from Aspergillus fumigatus (strain CBS 144.89 / FGSC A1163 / CEA10) (Neosartorya fumigata).